The primary structure comprises 339 residues: MFYKIAQKVMFQMDPERAHNLAIGSLRMTGNGPLNAFYAQNITPAPVSFMGLTFPNPVGLAAGMDKDGESIDAFHAMGFGHVEVGTVTPRPQPGNDLPRLFRLKPAKAIINRMGFNNKGVDNLVKNLIAKKTDIMVGVNIGKNKDTPVEQGKDDYLICMDKVYLHAAYIAVNISSPNTPGLRSLQYGDLLDELLSAIKAKQLELADKHKKYVPIALKIAPDLTIEEIENIAQALIKNQFDGAIATNTTLTRDGVSGLANANESGGLSGKPLTELSTKVIKQLATCLQGQIPIIGVGGINSAEDALAKFDAGATMVQIYSGFIYQGPKLIKEIVEAYRLK.

Residues 62 to 66 (AGMDK) and Thr86 contribute to the FMN site. Lys66 contributes to the substrate binding site. Residue 111 to 115 (NRMGF) participates in substrate binding. FMN is bound by residues Asn139 and Asn172. Residue Asn172 coordinates substrate. The active-site Nucleophile is Ser175. Asn177 serves as a coordination point for substrate. FMN-binding residues include Lys217 and Thr245. 246–247 (NT) serves as a coordination point for substrate. FMN-binding positions include Gly268, Gly297, and 318-319 (YS).

This sequence belongs to the dihydroorotate dehydrogenase family. Type 2 subfamily. In terms of assembly, monomer. The cofactor is FMN.

Its subcellular location is the cell membrane. It catalyses the reaction (S)-dihydroorotate + a quinone = orotate + a quinol. It functions in the pathway pyrimidine metabolism; UMP biosynthesis via de novo pathway; orotate from (S)-dihydroorotate (quinone route): step 1/1. Its function is as follows. Catalyzes the conversion of dihydroorotate to orotate with quinone as electron acceptor. The polypeptide is Dihydroorotate dehydrogenase (quinone) (Shewanella oneidensis (strain ATCC 700550 / JCM 31522 / CIP 106686 / LMG 19005 / NCIMB 14063 / MR-1)).